We begin with the raw amino-acid sequence, 402 residues long: Mannonate dehydratase (402 aa).

The protein belongs to the mannonate dehydratase family. Fe(2+) is required as a cofactor. It depends on Mn(2+) as a cofactor.

The enzyme catalyses D-mannonate = 2-dehydro-3-deoxy-D-gluconate + H2O. The protein operates within carbohydrate metabolism; pentose and glucuronate interconversion. Catalyzes the dehydration of D-mannonate. The protein is Mannonate dehydratase of Rhizobium meliloti (strain 1021) (Ensifer meliloti).